The primary structure comprises 130 residues: Methylglyoxal synthase (130 aa).

The 130-residue stretch at 1-130 (MSKPRIALIA…DLARTMQDVC (130 aa)) folds into the MGS-like domain. Residues His11, Lys15, 37 to 40 (TGTT), and 57 to 58 (SG) contribute to the substrate site. The active-site Proton donor/acceptor is the Asp63. His90 contributes to the substrate binding site.

The protein belongs to the methylglyoxal synthase family.

It catalyses the reaction dihydroxyacetone phosphate = methylglyoxal + phosphate. Its function is as follows. Catalyzes the formation of methylglyoxal from dihydroxyacetone phosphate. This is Methylglyoxal synthase from Burkholderia multivorans (strain ATCC 17616 / 249).